Here is a 242-residue protein sequence, read N- to C-terminus: Uridylate kinase (242 aa).

Residue Lys-11 to Gly-14 coordinates ATP. Residues Gly-19–Gly-24 form an involved in allosteric activation by GTP region. Gly-53 provides a ligand contact to UMP. ATP contacts are provided by Gly-54 and Arg-58. UMP contacts are provided by residues Asp-73 and Ile-134–Thr-141. ATP-binding residues include Asn-162, Tyr-168, and Asp-171.

It belongs to the UMP kinase family. In terms of assembly, homohexamer.

The protein resides in the cytoplasm. It carries out the reaction UMP + ATP = UDP + ADP. The protein operates within pyrimidine metabolism; CTP biosynthesis via de novo pathway; UDP from UMP (UMPK route): step 1/1. Allosterically activated by GTP. Inhibited by UTP. Catalyzes the reversible phosphorylation of UMP to UDP. This is Uridylate kinase from Streptococcus pyogenes serotype M2 (strain MGAS10270).